The primary structure comprises 166 residues: MAHIEKQAGELQEKLIAVNRVSKTVKGGRIFSFTALTVVGDGNGRVGFGYGKAREVPAAIQKAMEKARRNMKTVALNSGTLYHPVKGAHTGSRVFMQPAHEGTGIIAGGAMRAVLEVAGVRNVLAKTYGSTNPINVVRATLDALDSMKSPEMVAAKRGKSVEEILG.

Residues 11 to 74 (LQEKLIAVNR…EKARRNMKTV (64 aa)) form the S5 DRBM domain.

Belongs to the universal ribosomal protein uS5 family. Part of the 30S ribosomal subunit. Contacts proteins S4 and S8.

Its function is as follows. With S4 and S12 plays an important role in translational accuracy. In terms of biological role, located at the back of the 30S subunit body where it stabilizes the conformation of the head with respect to the body. In Photorhabdus laumondii subsp. laumondii (strain DSM 15139 / CIP 105565 / TT01) (Photorhabdus luminescens subsp. laumondii), this protein is Small ribosomal subunit protein uS5.